The primary structure comprises 847 residues: Putative membrane protein SCO5905 (847 aa).

12 helical membrane passes run 18-38, 187-207, 215-235, 248-268, 302-322, 326-346, 381-401, 539-559, 562-582, 600-620, 643-663, and 672-692; these read AVVV…APAL, GGDK…LLAI, LVPL…GAIL, ASIM…IITA, IVLA…GFGP, LGVA…VLLL, VKVA…LLGY, DTTL…VLLL, LLAP…TLGA, VTAY…IFIM, TGGV…VLMT, and FGFA…PLLV. The tract at residues 708–729 is disordered; sequence RPGTPQTPSTPTSEPPSADAPA. 3 helical membrane passes run 744-764, 778-798, and 808-828; these read FTWI…GMYL, FGTL…LVAI, and TIFA…EIWA.

Belongs to the resistance-nodulation-cell division (RND) (TC 2.A.6) family. MmpL subfamily.

Its subcellular location is the cell membrane. This is Putative membrane protein SCO5905 from Streptomyces coelicolor (strain ATCC BAA-471 / A3(2) / M145).